Here is a 247-residue protein sequence, read N- to C-terminus: tRNA uridine(34) hydroxylase (247 aa).

The Rhodanese domain occupies 124-218; sequence TQQDVIVIDT…YLEDTQNKNN (95 aa). Cys178 serves as the catalytic Cysteine persulfide intermediate.

This sequence belongs to the TrhO family.

The enzyme catalyses uridine(34) in tRNA + AH2 + O2 = 5-hydroxyuridine(34) in tRNA + A + H2O. Catalyzes oxygen-dependent 5-hydroxyuridine (ho5U) modification at position 34 in tRNAs. The sequence is that of tRNA uridine(34) hydroxylase from Rickettsia conorii (strain ATCC VR-613 / Malish 7).